We begin with the raw amino-acid sequence, 550 residues long: Hydroxylamine reductase (550 aa).

Cysteine 7, cysteine 10, cysteine 19, and cysteine 25 together coordinate [4Fe-4S] cluster. Hybrid [4Fe-2O-2S] cluster-binding residues include histidine 244, glutamate 268, cysteine 312, cysteine 405, cysteine 433, cysteine 458, glutamate 493, and lysine 495. Cysteine 405 is subject to Cysteine persulfide.

It belongs to the HCP family. It depends on [4Fe-4S] cluster as a cofactor. The cofactor is hybrid [4Fe-2O-2S] cluster.

The protein resides in the cytoplasm. The enzyme catalyses A + NH4(+) + H2O = hydroxylamine + AH2 + H(+). Catalyzes the reduction of hydroxylamine to form NH(3) and H(2)O. This is Hydroxylamine reductase from Porphyromonas gingivalis (strain ATCC BAA-308 / W83).